Reading from the N-terminus, the 408-residue chain is LL-diaminopimelate aminotransferase (408 aa).

Substrate contacts are provided by tyrosine 15 and glycine 42. Pyridoxal 5'-phosphate-binding positions include tyrosine 72, 108–109 (SK), tyrosine 132, asparagine 187, tyrosine 218, and 246–248 (SFS). The substrate site is built by lysine 109, tyrosine 132, and asparagine 187. Lysine 249 carries the N6-(pyridoxal phosphate)lysine modification. Residues arginine 257 and asparagine 291 each contribute to the pyridoxal 5'-phosphate site. Residues asparagine 291 and arginine 387 each contribute to the substrate site.

It belongs to the class-I pyridoxal-phosphate-dependent aminotransferase family. LL-diaminopimelate aminotransferase subfamily. Homodimer. It depends on pyridoxal 5'-phosphate as a cofactor.

The catalysed reaction is (2S,6S)-2,6-diaminopimelate + 2-oxoglutarate = (S)-2,3,4,5-tetrahydrodipicolinate + L-glutamate + H2O + H(+). It functions in the pathway amino-acid biosynthesis; L-lysine biosynthesis via DAP pathway; LL-2,6-diaminopimelate from (S)-tetrahydrodipicolinate (aminotransferase route): step 1/1. Its function is as follows. Involved in the synthesis of meso-diaminopimelate (m-DAP or DL-DAP), required for both lysine and peptidoglycan biosynthesis. Catalyzes the direct conversion of tetrahydrodipicolinate to LL-diaminopimelate. The sequence is that of LL-diaminopimelate aminotransferase from Prochlorococcus marinus (strain NATL1A).